Reading from the N-terminus, the 104-residue chain is MSTFTLSDLEAIVAIRAKASPDESWTAKLVTAGQDKAAKKLGEEAIEAVMAAVKNDRANLIYESADLLYHLLVVLKIADIPIETVMEELQRRTAQSGLSEKASR.

It belongs to the PRA-PH family.

It is found in the cytoplasm. The catalysed reaction is 1-(5-phospho-beta-D-ribosyl)-ATP + H2O = 1-(5-phospho-beta-D-ribosyl)-5'-AMP + diphosphate + H(+). It participates in amino-acid biosynthesis; L-histidine biosynthesis; L-histidine from 5-phospho-alpha-D-ribose 1-diphosphate: step 2/9. The polypeptide is Phosphoribosyl-ATP pyrophosphatase (Allorhizobium ampelinum (strain ATCC BAA-846 / DSM 112012 / S4) (Agrobacterium vitis (strain S4))).